A 449-amino-acid polypeptide reads, in one-letter code: Probable aminotransferase TAT1 (449 aa).

Residues 1-12 show a composition bias toward polar residues; that stretch reads MNHNSNLVLPSH. The tract at residues 1–20 is disordered; sequence MNHNSNLVLPSHQTETQTQD.

It belongs to the class-I pyridoxal-phosphate-dependent aminotransferase family. Requires pyridoxal 5'-phosphate as cofactor.

The sequence is that of Probable aminotransferase TAT1 from Arabidopsis thaliana (Mouse-ear cress).